The following is a 464-amino-acid chain: GTPase Der (464 aa).

EngA-type G domains follow at residues 3–166 (PVIA…PEVE) and 178–351 (IRIA…DSAF). GTP-binding positions include 9-16 (GRPNVGKS), 56-60 (DTGGL), 118-121 (NKTD), 184-191 (GRPNAGKS), 231-235 (DTAGV), and 296-299 (NKWD). The KH-like domain maps to 352 to 436 (IKVSTNHLTK…PIRLEFKTGE (85 aa)).

Belongs to the TRAFAC class TrmE-Era-EngA-EngB-Septin-like GTPase superfamily. EngA (Der) GTPase family. As to quaternary structure, associates with the 50S ribosomal subunit.

In terms of biological role, GTPase that plays an essential role in the late steps of ribosome biogenesis. The protein is GTPase Der of Thioalkalivibrio sulfidiphilus (strain HL-EbGR7).